Here is an 88-residue protein sequence, read N- to C-terminus: Small ribosomal subunit protein bS16 (88 aa).

This sequence belongs to the bacterial ribosomal protein bS16 family.

The sequence is that of Small ribosomal subunit protein bS16 from Halothermothrix orenii (strain H 168 / OCM 544 / DSM 9562).